The sequence spans 38 residues: Turripeptide GpIAa (38 aa).

This sequence belongs to the turripeptide family. As to expression, expressed by the venom duct.

The protein resides in the secreted. The polypeptide is Turripeptide GpIAa (Cryptogemma periscelida (Atlantic gem-turris)).